The primary structure comprises 531 residues: Chaperonin GroEL 2 (531 aa).

Residues 30 to 33, 87 to 91, G414, and D494 contribute to the ATP site; these read TLGP and DGTTT.

The protein belongs to the chaperonin (HSP60) family. In terms of assembly, forms a cylinder of 14 subunits composed of two heptameric rings stacked back-to-back. Interacts with the co-chaperonin GroES.

The protein resides in the cytoplasm. The enzyme catalyses ATP + H2O + a folded polypeptide = ADP + phosphate + an unfolded polypeptide.. Functionally, together with its co-chaperonin GroES, plays an essential role in assisting protein folding. The GroEL-GroES system forms a nano-cage that allows encapsulation of the non-native substrate proteins and provides a physical environment optimized to promote and accelerate protein folding. The chain is Chaperonin GroEL 2 from Cutibacterium acnes (strain DSM 16379 / KPA171202) (Propionibacterium acnes).